We begin with the raw amino-acid sequence, 142 residues long: Large ribosomal subunit protein bL17 (142 aa).

Belongs to the bacterial ribosomal protein bL17 family. As to quaternary structure, part of the 50S ribosomal subunit. Contacts protein L32.

The polypeptide is Large ribosomal subunit protein bL17 (Bartonella henselae (strain ATCC 49882 / DSM 28221 / CCUG 30454 / Houston 1) (Rochalimaea henselae)).